A 389-amino-acid polypeptide reads, in one-letter code: TelA-like protein SH1505 (389 aa).

Belongs to the TelA family.

This chain is TelA-like protein SH1505, found in Staphylococcus haemolyticus (strain JCSC1435).